Consider the following 228-residue polypeptide: Lipoprotein-releasing system ATP-binding protein LolD (228 aa).

The ABC transporter domain occupies 6–228 (IKCLNVVKGY…EAGVLNKQGQ (223 aa)). Residue 42 to 49 (GASGSGKS) participates in ATP binding.

It belongs to the ABC transporter superfamily. Lipoprotein translocase (TC 3.A.1.125) family. In terms of assembly, the complex is composed of two ATP-binding proteins (LolD) and two transmembrane proteins (LolC and LolE).

Its subcellular location is the cell inner membrane. Part of the ABC transporter complex LolCDE involved in the translocation of mature outer membrane-directed lipoproteins, from the inner membrane to the periplasmic chaperone, LolA. Responsible for the formation of the LolA-lipoprotein complex in an ATP-dependent manner. This chain is Lipoprotein-releasing system ATP-binding protein LolD, found in Saccharophagus degradans (strain 2-40 / ATCC 43961 / DSM 17024).